A 544-amino-acid chain; its full sequence is 4-coumarate:CoA ligase 1 (544 aa).

The protein belongs to the ATP-dependent AMP-binding enzyme family. In terms of assembly, monomer. In terms of tissue distribution, mostly expressed in flower organs, with highest levels in corollas, and, to a lesser extent, in tubes, sepals, pistils, stamen and ovaries. Also present at low levels in leaves.

Its subcellular location is the cytoplasm. It localises to the cytosol. It carries out the reaction (E)-4-coumarate + ATP + CoA = (E)-4-coumaroyl-CoA + AMP + diphosphate. It catalyses the reaction (E)-caffeate + ATP + CoA = (E)-caffeoyl-CoA + AMP + diphosphate. The enzyme catalyses benzoate + ATP + CoA = benzoyl-CoA + AMP + diphosphate. The catalysed reaction is (E)-cinnamate + ATP + CoA = (E)-cinnamoyl-CoA + AMP + diphosphate. It carries out the reaction (E)-ferulate + ATP + CoA = (E)-feruloyl-CoA + AMP + diphosphate. It functions in the pathway phenylpropanoid metabolism; trans-cinnamate biosynthesis. The protein operates within phytoalexin biosynthesis; 3,4',5-trihydroxystilbene biosynthesis; 3,4',5-trihydroxystilbene from trans-4-coumarate: step 1/2. In terms of biological role, catalyzes the formation of CoA esters of trans-cinnamic acid, 4-coumaric acid, ferulic acid, benzoic acid and caffeic acid. The polypeptide is 4-coumarate:CoA ligase 1 (Petunia hybrida (Petunia)).